A 65-amino-acid chain; its full sequence is Protein translocase subunit SecE (65 aa).

Residues 1–34 lie on the Cytoplasmic side of the membrane; it reads MEKLRKFFREVIAEAKKISWPSRKELLTSFGVVL. Residues 35–51 traverse the membrane as a helical segment; it reads VILAVTSVYFFVLDFIF. The Extracellular portion of the chain corresponds to 52 to 65; that stretch reads SGVVSAIFKALGIG.

Belongs to the SecE/SEC61-gamma family. Component of the Sec protein translocase complex. Heterotrimer consisting of SecY, SecE and SecG subunits. The heterotrimers can form oligomers, although 1 heterotrimer is thought to be able to translocate proteins. Interacts with SecDF, and other proteins may be involved. The channel interacts with SecA via subunit SecY.

The protein resides in the cell inner membrane. Essential subunit of the protein translocation channel SecYEG. Clamps together the 2 halves of SecY. May contact the channel plug during translocation. The protein is Protein translocase subunit SecE of Thermotoga maritima (strain ATCC 43589 / DSM 3109 / JCM 10099 / NBRC 100826 / MSB8).